We begin with the raw amino-acid sequence, 238 residues long: Cysteine-rich venom protein (238 aa).

Positions 1–19 (MIAFIVLLSLAAVLQQSSG) are cleaved as a signal peptide. Positions 38-164 (VDKHNALRRS…STKYLYVCQY (127 aa)) constitute an SCP domain. 8 disulfides stabilise this stretch: Cys75-Cys153, Cys92-Cys165, Cys148-Cys162, Cys184-Cys191, Cys187-Cys196, Cys200-Cys233, Cys209-Cys227, and Cys218-Cys231. The ShKT domain maps to 200-233 (CKYEDAFTNCKALAKKTKCKTEWIKSKCPATCFC).

This sequence belongs to the CRISP family. Expressed by the venom gland.

Its subcellular location is the secreted. Its function is as follows. Blocks contraction of smooth muscle elicited by high potassium-induced depolarization, but does not block caffeine-stimulated contraction. May target voltage-gated calcium channels on smooth muscle. This chain is Cysteine-rich venom protein, found in Austrelaps superbus (Lowland copperhead snake).